The primary structure comprises 199 residues: Thymidine kinase (199 aa).

ATP is bound by residues 23-30 (GSMFSGKT) and 95-98 (DEAQ). E96 functions as the Proton acceptor in the catalytic mechanism. Residues C152, C155, C184, and C187 each contribute to the Zn(2+) site.

This sequence belongs to the thymidine kinase family. In terms of assembly, homotetramer.

The protein localises to the cytoplasm. The enzyme catalyses thymidine + ATP = dTMP + ADP + H(+). In Bacteroides fragilis (strain YCH46), this protein is Thymidine kinase.